The following is a 157-amino-acid chain: Crossover junction endodeoxyribonuclease RuvC (157 aa).

Catalysis depends on residues Asp-7, Glu-67, and Asp-139. Residues Asp-7, Glu-67, and Asp-139 each contribute to the Mg(2+) site.

This sequence belongs to the RuvC family. As to quaternary structure, homodimer which binds Holliday junction (HJ) DNA. The HJ becomes 2-fold symmetrical on binding to RuvC with unstacked arms; it has a different conformation from HJ DNA in complex with RuvA. In the full resolvosome a probable DNA-RuvA(4)-RuvB(12)-RuvC(2) complex forms which resolves the HJ. It depends on Mg(2+) as a cofactor.

It localises to the cytoplasm. The enzyme catalyses Endonucleolytic cleavage at a junction such as a reciprocal single-stranded crossover between two homologous DNA duplexes (Holliday junction).. Its function is as follows. The RuvA-RuvB-RuvC complex processes Holliday junction (HJ) DNA during genetic recombination and DNA repair. Endonuclease that resolves HJ intermediates. Cleaves cruciform DNA by making single-stranded nicks across the HJ at symmetrical positions within the homologous arms, yielding a 5'-phosphate and a 3'-hydroxyl group; requires a central core of homology in the junction. The consensus cleavage sequence is 5'-(A/T)TT(C/G)-3'. Cleavage occurs on the 3'-side of the TT dinucleotide at the point of strand exchange. HJ branch migration catalyzed by RuvA-RuvB allows RuvC to scan DNA until it finds its consensus sequence, where it cleaves and resolves the cruciform DNA. This Prochlorococcus marinus (strain AS9601) protein is Crossover junction endodeoxyribonuclease RuvC.